We begin with the raw amino-acid sequence, 109 residues long: Probable gas vesicle protein J1 (109 aa).

Belongs to the gas vesicle GvpA family. As to quaternary structure, interacts with GvpA.

The protein localises to the gas vesicle. Its function is as follows. A minor component of the gas vesicle, might be involved in nucleating gas vesicle formation. Gas vesicles (GV) are hollow, gas filled proteinaceous nanostructures. It is not clear what function GVs perform in soil bacteria. The chain is Probable gas vesicle protein J1 (gvpJ1) from Streptomyces coelicolor (strain ATCC BAA-471 / A3(2) / M145).